Consider the following 474-residue polypeptide: Putative pectinesterase/pectinesterase inhibitor 38 (474 aa).

Positions 1 to 130 are pectinesterase inhibitor 38; it reads MVFGNEMCDE…HSLESITIDV (130 aa). N-linked (GlcNAc...) asparagine glycosylation is present at asparagine 80. The segment at 164 to 461 is pectinesterase 38; the sequence is DVVVAQDGSG…TLPKFIDSAS (298 aa). Residues threonine 241 and glutamine 271 each coordinate substrate. The Proton donor; for pectinesterase activity role is filled by aspartate 294. A disulfide bond links cysteine 308 and cysteine 328. Catalysis depends on aspartate 315, which acts as the Nucleophile; for pectinesterase activity. Asparagine 351 carries N-linked (GlcNAc...) asparagine glycosylation. Residues arginine 380 and tryptophan 382 each coordinate substrate. N-linked (GlcNAc...) asparagine glycosylation is present at asparagine 409.

It in the N-terminal section; belongs to the PMEI family. In the C-terminal section; belongs to the pectinesterase family.

Its subcellular location is the secreted. It is found in the cell wall. The catalysed reaction is [(1-&gt;4)-alpha-D-galacturonosyl methyl ester](n) + n H2O = [(1-&gt;4)-alpha-D-galacturonosyl](n) + n methanol + n H(+). The protein operates within glycan metabolism; pectin degradation; 2-dehydro-3-deoxy-D-gluconate from pectin: step 1/5. Functionally, acts in the modification of cell walls via demethylesterification of cell wall pectin. This chain is Putative pectinesterase/pectinesterase inhibitor 38 (PME38), found in Arabidopsis thaliana (Mouse-ear cress).